A 406-amino-acid chain; its full sequence is E3 ubiquitin-protein ligase RING1 (406 aa).

A Phosphothreonine modification is found at T24. Residues 30–234 form a necessary for transcriptional repression region; the sequence is MDGTEIAVSP…GGAGSEDSGD (205 aa). S38 is modified (phosphoserine). The segment at 48–88 adopts an RING-type zinc-finger fold; it reads CPICLDMLKNTMTTKECLHRFCSDCIVTALRSGNKECPTCR. S140, S187, and S190 each carry phosphoserine. 2 disordered regions span residues 151-263 and 309-354; these read HRAQ…GEIE and QQQE…PSLE. Over residues 175–187 the composition is skewed to acidic residues; sequence EPGEGEGDGEDIS. Positions 201–204 match the Nuclear localization signal motif; it reads KRPR. The segment covering 205–228 has biased composition (gly residues); the sequence is GGGAGGSSVGTGGGAAGGACGGAG. At T215 the chain carries Phosphothreonine. Residues S229 and S232 each carry the phosphoserine modification. The tract at residues 230–406 is necessary for interaction with CBX2; sequence EDSGDRGGTL…LCYAPTKDPK (177 aa). Gly residues predominate over residues 235–244; it reads RGGTLGGGTL. Residues 246 to 258 show a composition bias toward pro residues; that stretch reads PPSPPGAPSPPEP. Phosphoserine is present on residues S248 and S254. A compositionally biased stretch (gly residues) spans 317–343; it reads GGPGGGASDTGGPDGGGGERGVSGGGE.

Component of chromatin-associated Polycomb (PcG) complexes. Part of the E2F6.com-1 complex in G0 phase composed of E2F6, MGA, MAX, TFDP1, CBX3, BAT8, EUHMTASE1, RING1, RNF2/RING2 MBLR, L3MBTL2 and YAF2. Interacts with CBX2 and PCGF6. Component of a PRC1-like complex. Component of repressive BCOR complex containing Polycomb group subcomplex at least composed of RYBP, PCGF1, BCOR and RNF2/RING2. Interacts with BMI1, PHC2, PCGF2, RNF2; CBX6, CBX7 and CBX8. Interacts with MN1. Interacts with USP26.

It is found in the nucleus speckle. It carries out the reaction S-ubiquitinyl-[E2 ubiquitin-conjugating enzyme]-L-cysteine + [acceptor protein]-L-lysine = [E2 ubiquitin-conjugating enzyme]-L-cysteine + N(6)-ubiquitinyl-[acceptor protein]-L-lysine.. The protein operates within protein modification; protein ubiquitination. Functionally, constitutes one of the E3 ubiquitin-protein ligases that mediate monoubiquitination of 'Lys-119' of histone H2A, thereby playing a central role in histone code and gene regulation. H2A 'Lys-119' ubiquitination gives a specific tag for epigenetic transcriptional repression and participates in X chromosome inactivation of female mammals. Essential component of a Polycomb group (PcG) multiprotein PRC1-like complex, a complex class required to maintain the transcriptionally repressive state of many genes, including Hox genes, throughout development. PcG PRC1 complex acts via chromatin remodeling and modification of histones, rendering chromatin heritably changed in its expressibility. Compared to RNF2/RING2, it does not have the main E3 ubiquitin ligase activity on histone H2A, and it may rather act as a modulator of RNF2/RING2 activity. The sequence is that of E3 ubiquitin-protein ligase RING1 from Rattus norvegicus (Rat).